A 428-amino-acid polypeptide reads, in one-letter code: Endoplasmic reticulum junction formation protein lunapark (428 aa).

A lipid anchor (N-myristoyl glycine) is attached at G2. At 2 to 45 the chain is on the cytoplasmic side; it reads GGLFSRWRTKLSTVEVLESIDKEIQALEEFREKNQRLQKLRVGR. A coiled-coil region spans residues 16-43; sequence EVLESIDKEIQALEEFREKNQRLQKLRV. The chain crosses the membrane as a helical span at residues 46–66; that stretch reads LILYSSVLYLFTCLIVYLWYL. At 67-77 the chain is on the lumenal side; it reads PDEFTARLAMT. The chain crosses the membrane as a helical span at residues 78 to 98; the sequence is LPFFAFPLIIWSIRTVIIFFF. The Cytoplasmic segment spans residues 99-428; that stretch reads SKRTERNNEA…ELNGESLTAE (330 aa). Positions 102–128 form a coiled coil; it reads TERNNEALDDLKSQRKKILEEVMEKET. A phosphoserine mark is found at S114, S153, S177, S182, and S194. Positions 143–248 are disordered; it reads SKKAKECEPP…PPGPPLARPI (106 aa). Positions 185–198 are enriched in pro residues; the sequence is QGPPPQVPVSPGPP. Phosphothreonine is present on residues T211 and T213. A phosphoserine mark is found at S217 and S227. The C4-type; plays a role in ER morphology zinc finger occupies 276 to 301; that stretch reads CQQCFSHNGMALKEEFEYIAFRCAYC. 3 positions are modified to phosphoserine: S321, S353, and S384. Positions 361–428 are disordered; sequence NNTEQTDDKI…ELNGESLTAE (68 aa). Acidic residues predominate over residues 386–401; sequence SEEPEEKQETENEEAS. S414 carries the phosphoserine modification.

The protein belongs to the lunapark family. Homodimer; homodimerization requires the C4-type zinc finger motif and decreases during mitosis in a phosphorylation-dependent manner. Post-translationally, myristoylated; myristoylation is necessary for the endoplasmic reticulum (ER) three-way ER tubular junction formation, but is not required neither for membrane translocation, membrane topology formation, nor for the specific localization to ER membranes. Phosphorylated. Phosphorylation occurs at Ser-177, Ser-182, Ser-217, Ser-227, Ser-321 and Ser-384 during interphase. Phosphorylation occurs at Ser-114, Ser-153, Ser-194, Thr-211 and Ser-353 during mitosis; these phosphorylations reduce both its homodimerization and the ER three-way tubular junction formation. In terms of processing, subject to proteasomal degradation following phosphorylation during mitosis.

The protein resides in the endoplasmic reticulum membrane. In terms of biological role, endoplasmic reticulum (ER)-shaping membrane protein that plays a role in determining ER morphology. Involved in the stabilization of nascent three-way ER tubular junctions within the ER network. May also play a role as a curvature-stabilizing protein within three-way ER tubular junction network. May be involved in limb and central nervous system development. The protein is Endoplasmic reticulum junction formation protein lunapark of Pongo abelii (Sumatran orangutan).